A 414-amino-acid chain; its full sequence is Nucleoporin NUP42 (414 aa).

The C3H1-type zinc-finger motif lies at 1–25; it reads MPVCNFFLQGRCRYGDTCWNEHPTG. 2 disordered regions span residues 24-73 and 200-221; these read TGGR…RGAA and PPASAPGFGSPGPGFGSATSGF. FG repeat units lie at residues 43–44, 207–208, 214–215, 221–222, 233–234, 238–239, 257–258, 268–269, 280–281, 306–307, 325–326, 329–330, 335–336, 341–342, 347–348, 351–352, and 362–363; these read FG.

In terms of assembly, probable component of the nuclear pore complex (NPC).

It localises to the nucleus. Its subcellular location is the nuclear pore complex. The protein localises to the nucleus membrane. In terms of biological role, required for the export of mRNAs containing poly(A) tails from the nucleus into the cytoplasm. The chain is Nucleoporin NUP42 (nup42) from Danio rerio (Zebrafish).